We begin with the raw amino-acid sequence, 306 residues long: UDP-3-O-acyl-N-acetylglucosamine deacetylase (306 aa).

Zn(2+) is bound by residues His-79, His-238, and Asp-242. The active-site Proton donor is His-265.

The protein belongs to the LpxC family. It depends on Zn(2+) as a cofactor.

The catalysed reaction is a UDP-3-O-[(3R)-3-hydroxyacyl]-N-acetyl-alpha-D-glucosamine + H2O = a UDP-3-O-[(3R)-3-hydroxyacyl]-alpha-D-glucosamine + acetate. The protein operates within glycolipid biosynthesis; lipid IV(A) biosynthesis; lipid IV(A) from (3R)-3-hydroxytetradecanoyl-[acyl-carrier-protein] and UDP-N-acetyl-alpha-D-glucosamine: step 2/6. In terms of biological role, catalyzes the hydrolysis of UDP-3-O-myristoyl-N-acetylglucosamine to form UDP-3-O-myristoylglucosamine and acetate, the committed step in lipid A biosynthesis. This Idiomarina loihiensis (strain ATCC BAA-735 / DSM 15497 / L2-TR) protein is UDP-3-O-acyl-N-acetylglucosamine deacetylase.